Here is a 367-residue protein sequence, read N- to C-terminus: Forkhead box protein I1-B (367 aa).

Disordered regions lie at residues 1-21 and 213-274; these read MNPVQQPAQHRSPASLLHLPH and DNGN…PPTV. Positions 128-222 form a DNA-binding region, fork-head; sequence RPPYSYSALI…DNGNFRRKRK (95 aa). Residues 233-246 show a composition bias toward basic and acidic residues; the sequence is AKRDEDHLNPKGKE. The segment covering 252-274 has biased composition (polar residues); that stretch reads TPSSSPEVLSPTGHSKSPSPPTV.

Initially localized to the animal hemisphere (the presumptive ectoderm) of early-mid blastula embryos. Becomes restricted to head placodes, excluding the otic placodes, by the tailbud stages.

It localises to the nucleus. Transcription factor. Essential for ventral specification of the early cephalic (head) ectoderm during gastrulation, playing a role in the 'non-neural' versus 'neural' cell fate choice. Binds to DNA via the target sequence 5'-[AG]TAAA[CT]A-3', with 5'-ATAAACA-3' being the preferred binding site. The protein is Forkhead box protein I1-B (foxi1-b) of Xenopus laevis (African clawed frog).